The primary structure comprises 959 residues: Ataxin-2 homolog (959 aa).

A Sm domain is found at 13 to 92 (DVLSAINDMI…IVDFAYVTQE (80 aa)). Disordered stretches follow at residues 203–378 (AREI…GSRV), 392–484 (TAPK…SVIT), 501–528 (PRVA…HPAM), 697–831 (PPQG…QHIQ), and 867–959 (PMQQ…QSPP). Residues 226–235 (DLDKITRQED) show a composition bias toward basic and acidic residues. Residues 246 to 260 (NNSFNQQQQQRRNPN) show a composition bias toward low complexity. Basic and acidic residues predominate over residues 270 to 281 (RRAEGLRGDRRN). Residues 282-313 (SGSSSANNSRYGAPAAAQQNYSQNQQQQQGQK) show a composition bias toward low complexity. Composition is skewed to polar residues over residues 341-356 (RQQQ…NNNV) and 473-484 (VSVTSENDSVIT). Composition is skewed to low complexity over residues 504–528 (APAT…HPAM), 697–707 (PPQGQQQQPRY), and 715–725 (QQQQQQPQQQQ). 2 stretches are compositionally biased toward polar residues: residues 726-742 (FSGE…SQPT) and 756-765 (APQNGNMQAE). The span at 766–788 (SSSNASHSGSTSSQSGQRSGSPP) shows a compositional bias: low complexity. Residues 789–798 (GAVPPPPPPQ) show a composition bias toward pro residues. 3 stretches are compositionally biased toward low complexity: residues 822-831 (MMQQQQQHIQ), 867-876 (PMQQNQHPQQ), and 902-911 (QQQQQQQQQQ). Residues 912–922 (MHRQNSLPQQF) are compositionally biased toward polar residues. The span at 923 to 935 (QGNQGVNPSGQQS) shows a compositional bias: low complexity. The segment covering 948–959 (TPRDQQHSQSPP) has biased composition (polar residues).

Belongs to the ataxin-2 family. As to quaternary structure, interacts (via C-terminus) with szy-20 (via C-terminus); the interaction is RNA independent. Interacts with pab-1. Interacts with gdi-1. As to expression, expressed in the central nervous system, dorsal and ventral nerve cord, intestinal lining and body-wall muscle. Expressed in the gonad.

It is found in the cytoplasm. Its subcellular location is the nucleus. Functionally, probable RNA-binding protein that negatively regulates the translation of targets. Functions with RNA-binding protein szy-20 to ensure embryonic cell division, and to this end, plays a role in the regulation of centrosome assembly, position and size, and in astral microtubule outgrowth and nucleation. Required for gonad development, germ cell proliferation and for the production of oocytes. Regulates whole body growth and fat accumulation in response to food availability, and this may be through the mTOR pathway, upstream of daf-15 and rheb-1. The protein is Ataxin-2 homolog of Caenorhabditis elegans.